A 98-amino-acid chain; its full sequence is NADH-ubiquinone oxidoreductase chain 4L (98 aa).

A run of 3 helical transmembrane segments spans residues 1–21 (MSLI…GLLM), 29–49 (ALLC…LTAL), and 59–79 (MPII…ALLV).

It belongs to the complex I subunit 4L family. Core subunit of respiratory chain NADH dehydrogenase (Complex I) which is composed of 45 different subunits.

The protein resides in the mitochondrion inner membrane. The catalysed reaction is a ubiquinone + NADH + 5 H(+)(in) = a ubiquinol + NAD(+) + 4 H(+)(out). Functionally, core subunit of the mitochondrial membrane respiratory chain NADH dehydrogenase (Complex I) which catalyzes electron transfer from NADH through the respiratory chain, using ubiquinone as an electron acceptor. Part of the enzyme membrane arm which is embedded in the lipid bilayer and involved in proton translocation. The protein is NADH-ubiquinone oxidoreductase chain 4L (MT-ND4L) of Hyperoodon ampullatus (Northern bottlenose whale).